Reading from the N-terminus, the 1036-residue chain is Multiple C2 domain and transmembrane region protein 2 (1036 aa).

The 110-residue stretch at 1–110 (MRNTTKLVVH…YKDDQVYQRF (110 aa)) folds into the C2 1 domain. 2 disordered regions span residues 137 to 204 (DQTF…PVQK) and 225 to 246 (RENP…HPQN). Residues 146 to 155 (PYTSPTQASA) show a composition bias toward polar residues. The span at 158–168 (TEEDTADSETE) shows a compositional bias: acidic residues. Positions 190–204 (VEGKKSEEVKEPVQK) are enriched in basic and acidic residues. C2 domains lie at 277-399 (PNAG…PQWY), 440-563 (VHGE…SRWF), and 607-734 (YISD…THSF). Ca(2+)-binding residues include aspartate 316, aspartate 364, glutamate 366, and aspartate 372. Helical transmembrane passes span 871–891 (FILV…MFFI) and 979–999 (LFIL…FKAI).

It belongs to the MCTP family. Requires Ca(2+) as cofactor. As to expression, expressed in the vascular tissues of roots and rosette leaves. Accumulates in roots meristems. Observed in flowers.

The protein resides in the cell membrane. Its function is as follows. May function as a signaling molecule by regulating the trafficking of other regulators. The polypeptide is Multiple C2 domain and transmembrane region protein 2 (Arabidopsis thaliana (Mouse-ear cress)).